The primary structure comprises 79 residues: Sulfur carrier protein TusA (79 aa).

The active-site Cysteine persulfide intermediate is C17.

This sequence belongs to the sulfur carrier protein TusA family.

It is found in the cytoplasm. Its function is as follows. Sulfur carrier protein which probably makes part of a sulfur-relay system. This is Sulfur carrier protein TusA from Haemophilus influenzae (strain ATCC 51907 / DSM 11121 / KW20 / Rd).